The primary structure comprises 339 residues: UDP-N-acetylenolpyruvoylglucosamine reductase (339 aa).

In terms of domain architecture, FAD-binding PCMH-type spans 19 to 189 (VDVQARLFAE…LRVRFKLSRV (171 aa)). The active site involves R166. The Proton donor role is filled by S239. Residue E335 is part of the active site.

This sequence belongs to the MurB family. FAD serves as cofactor.

The protein localises to the cytoplasm. The catalysed reaction is UDP-N-acetyl-alpha-D-muramate + NADP(+) = UDP-N-acetyl-3-O-(1-carboxyvinyl)-alpha-D-glucosamine + NADPH + H(+). It participates in cell wall biogenesis; peptidoglycan biosynthesis. Its function is as follows. Cell wall formation. The sequence is that of UDP-N-acetylenolpyruvoylglucosamine reductase from Pseudomonas savastanoi pv. phaseolicola (strain 1448A / Race 6) (Pseudomonas syringae pv. phaseolicola (strain 1448A / Race 6)).